A 747-amino-acid chain; its full sequence is Cyclic di-GMP phosphodiesterase PdeF (747 aa).

Residues 1–14 (MKLNATYIKIRDKW) are Periplasmic-facing. The helical transmembrane segment at 15-36 (WGLPLFLPSLILPIFAHINTFA) threads the bilayer. Residues 37 to 42 (HISSGE) lie on the Cytoplasmic side of the membrane. A helical transmembrane segment spans residues 43–65 (VFLFYLPLALMISMMMFFSWAAL). The Periplasmic segment spans residues 66 to 79 (PGIALGIFVRKYAE). The chain crosses the membrane as a helical span at residues 80–102 (LGFYETLSLTANFIIIIILCWGG). Residues 103–128 (YRVFTPRRNNVSHGDTRLISQRIFWQ) are Cytoplasmic-facing. Residues 129–151 (IVFPATLFLILFQFAAFVGLLAS) form a helical membrane-spanning segment. Residues 152 to 165 (RENLVGVMPFNLGT) lie on the Periplasmic side of the membrane. Residues 166–188 (LINYQALLVGNLIGVPLCYFIIR) form a helical membrane-spanning segment. Residues 189–215 (VVRNPFYLRSYYSQLKQQVDAKVTKKE) are Cytoplasmic-facing. Residues 216 to 235 (FALWLLALGALLLLLCMPLN) form a helical membrane-spanning segment. Over 236–239 (EKST) the chain is Periplasmic. The helical transmembrane segment at 240–259 (IFSTNYTLSLLLPLMMWGAM) threads the bilayer. Over 260–265 (RYGYKL) the chain is Cytoplasmic. A helical membrane pass occupies residues 266–285 (ISLLWAVVLMISIHSYQNYI). Over 286-294 (PIYPGYTTQ) the chain is Periplasmic. A helical transmembrane segment spans residues 295–317 (LTITSSSYLVFSFIVNYMAVLAT). Over 318-747 (RQRAVVRRIQ…NEIEPIRESA (430 aa)) the chain is Cytoplasmic. The EAL domain occupies 493–744 (KVAMMNRLQQ…DTLNEIEPIR (252 aa)).

It depends on Mg(2+) as a cofactor. Mn(2+) serves as cofactor.

Its subcellular location is the cell inner membrane. It catalyses the reaction 3',3'-c-di-GMP + H2O = 5'-phosphoguanylyl(3'-&gt;5')guanosine + H(+). With respect to regulation, inhibited by pGpG. In terms of biological role, phosphodiesterase (PDE) that catalyzes the hydrolysis of cyclic-di-GMP (c-di-GMP) to 5'-pGpG. Truncated proteins consisting of the GGDEF/EAL domains (residues 319-747) or of the EAL domain alone (481-747) have c-di-GMP phosphodiesterase activity. They do not have diguanylate cyclase activity. Cyclic-di-GMP is a second messenger which controls cell surface-associated traits in bacteria. This is Cyclic di-GMP phosphodiesterase PdeF from Escherichia coli (strain K12).